Here is a 496-residue protein sequence, read N- to C-terminus: Glutamate--tRNA ligase (496 aa).

A 'HIGH' region motif is present at residues 12–22; it reads PSPTGTPHVGL. Residues 256-260 carry the 'KMSKS' region motif; that stretch reads KLSKR. An ATP-binding site is contributed by Lys-259.

It belongs to the class-I aminoacyl-tRNA synthetase family. Glutamate--tRNA ligase type 1 subfamily. As to quaternary structure, monomer.

Its subcellular location is the cytoplasm. It carries out the reaction tRNA(Glu) + L-glutamate + ATP = L-glutamyl-tRNA(Glu) + AMP + diphosphate. Catalyzes the attachment of glutamate to tRNA(Glu) in a two-step reaction: glutamate is first activated by ATP to form Glu-AMP and then transferred to the acceptor end of tRNA(Glu). The protein is Glutamate--tRNA ligase of Mycobacteroides abscessus (strain ATCC 19977 / DSM 44196 / CCUG 20993 / CIP 104536 / JCM 13569 / NCTC 13031 / TMC 1543 / L948) (Mycobacterium abscessus).